The sequence spans 159 residues: Ribosomal RNA large subunit methyltransferase H (159 aa).

Residues leucine 76, glycine 108, and phenylalanine 127–phenylalanine 132 contribute to the S-adenosyl-L-methionine site.

This sequence belongs to the RNA methyltransferase RlmH family. Homodimer.

It is found in the cytoplasm. The enzyme catalyses pseudouridine(1915) in 23S rRNA + S-adenosyl-L-methionine = N(3)-methylpseudouridine(1915) in 23S rRNA + S-adenosyl-L-homocysteine + H(+). In terms of biological role, specifically methylates the pseudouridine at position 1915 (m3Psi1915) in 23S rRNA. The chain is Ribosomal RNA large subunit methyltransferase H from Clostridioides difficile (strain 630) (Peptoclostridium difficile).